Reading from the N-terminus, the 223-residue chain is Cytidylate kinase (223 aa).

Residues 1–23 form a disordered region; it reads MSTSPLVIAIDGPSGSGKSSTSR. 12–20 is a binding site for ATP; that stretch reads GPSGSGKSS.

Belongs to the cytidylate kinase family. Type 1 subfamily.

The protein resides in the cytoplasm. It catalyses the reaction CMP + ATP = CDP + ADP. The catalysed reaction is dCMP + ATP = dCDP + ADP. This is Cytidylate kinase from Cutibacterium acnes (strain DSM 16379 / KPA171202) (Propionibacterium acnes).